A 225-amino-acid chain; its full sequence is NAD(P)H-quinone oxidoreductase subunit K, chloroplastic (225 aa).

Positions 43, 44, 108, and 139 each coordinate [4Fe-4S] cluster.

This sequence belongs to the complex I 20 kDa subunit family. NDH is composed of at least 16 different subunits, 5 of which are encoded in the nucleus. Requires [4Fe-4S] cluster as cofactor.

It is found in the plastid. The protein localises to the chloroplast thylakoid membrane. The catalysed reaction is a plastoquinone + NADH + (n+1) H(+)(in) = a plastoquinol + NAD(+) + n H(+)(out). It carries out the reaction a plastoquinone + NADPH + (n+1) H(+)(in) = a plastoquinol + NADP(+) + n H(+)(out). Functionally, NDH shuttles electrons from NAD(P)H:plastoquinone, via FMN and iron-sulfur (Fe-S) centers, to quinones in the photosynthetic chain and possibly in a chloroplast respiratory chain. The immediate electron acceptor for the enzyme in this species is believed to be plastoquinone. Couples the redox reaction to proton translocation, and thus conserves the redox energy in a proton gradient. This Liriodendron tulipifera (Tuliptree) protein is NAD(P)H-quinone oxidoreductase subunit K, chloroplastic.